Reading from the N-terminus, the 128-residue chain is Calcitonin gene-related peptide 1 (128 aa).

The signal sequence occupies residues 1–25; the sequence is MGLWKSSPFLAFSILVLCQAGGLQA. A propeptide spanning residues 26–80 is cleaved from the precursor; the sequence is APFRSALEGLPDPTALSEKEGRLLLAALVKAYVQRKNELEQEQEQETEGSSITAQ. The interval 63-83 is disordered; the sequence is ELEQEQEQETEGSSITAQKRS. A compositionally biased stretch (polar residues) spans 74 to 83; the sequence is GSSITAQKRS. The cysteines at positions 84 and 89 are disulfide-linked. Residue Phe-119 is modified to Phenylalanine amide. Positions 125–128 are excised as a propeptide; that stretch reads DLRA.

This sequence belongs to the calcitonin family.

The protein localises to the secreted. Its function is as follows. CGRP1/CALCA is a peptide hormone that induces vasodilation mediated by the CALCRL-RAMP1 receptor complex. Dilates a variety of vessels including the coronary, cerebral and systemic vasculature. Its abundance in the CNS also points toward a neurotransmitter or neuromodulator role. It also elevates platelet cAMP. CGRP1 can also bind and activate CALCR-RAMP1 (AMYR1) receptor complex. This chain is Calcitonin gene-related peptide 1 (CALCA), found in Canis lupus familiaris (Dog).